Here is a 511-residue protein sequence, read N- to C-terminus: Sterol 14-alpha demethylase resB (511 aa).

A helical membrane pass occupies residues 3-23 (ILWIVAYALLAFAASIALNLV). Heme is bound at residue C451.

It belongs to the cytochrome P450 family. Heme serves as cofactor.

The protein localises to the membrane. It catalyses the reaction a 14alpha-methyl steroid + 3 reduced [NADPH--hemoprotein reductase] + 3 O2 = a Delta(14) steroid + formate + 3 oxidized [NADPH--hemoprotein reductase] + 4 H2O + 4 H(+). The catalysed reaction is a 14alpha-methyl steroid + reduced [NADPH--hemoprotein reductase] + O2 = a 14alpha-hydroxymethyl steroid + oxidized [NADPH--hemoprotein reductase] + H2O + H(+). The enzyme catalyses a 14alpha-hydroxymethyl steroid + reduced [NADPH--hemoprotein reductase] + O2 = a 14alpha-formyl steroid + oxidized [NADPH--hemoprotein reductase] + 2 H2O + H(+). It carries out the reaction a 14alpha-formyl steroid + reduced [NADPH--hemoprotein reductase] + O2 = a Delta(14) steroid + formate + oxidized [NADPH--hemoprotein reductase] + H2O + 2 H(+). It catalyses the reaction lanosterol + 3 reduced [NADPH--hemoprotein reductase] + 3 O2 = 4,4-dimethyl-5alpha-cholesta-8,14,24-trien-3beta-ol + formate + 3 oxidized [NADPH--hemoprotein reductase] + 4 H2O + 4 H(+). The catalysed reaction is lanosterol + reduced [NADPH--hemoprotein reductase] + O2 = 32-hydroxylanosterol + oxidized [NADPH--hemoprotein reductase] + H2O + H(+). The enzyme catalyses 32-hydroxylanosterol + reduced [NADPH--hemoprotein reductase] + O2 = 32-oxolanosterol + oxidized [NADPH--hemoprotein reductase] + 2 H2O + H(+). It carries out the reaction 32-oxolanosterol + reduced [NADPH--hemoprotein reductase] + O2 = 4,4-dimethyl-5alpha-cholesta-8,14,24-trien-3beta-ol + formate + oxidized [NADPH--hemoprotein reductase] + H2O + 2 H(+). It catalyses the reaction eburicol + 3 reduced [NADPH--hemoprotein reductase] + 3 O2 = 14-demethyleburicol + formate + 3 oxidized [NADPH--hemoprotein reductase] + 4 H2O + 4 H(+). The catalysed reaction is eburicol + reduced [NADPH--hemoprotein reductase] + O2 = 32-hydroxyeburicol + oxidized [NADPH--hemoprotein reductase] + H2O + H(+). The enzyme catalyses 32-hydroxyeburicol + reduced [NADPH--hemoprotein reductase] + O2 = 32-oxoeburicol + oxidized [NADPH--hemoprotein reductase] + 2 H2O + H(+). It carries out the reaction 32-oxoeburicol + reduced [NADPH--hemoprotein reductase] + O2 = 14-demethyleburicol + formate + oxidized [NADPH--hemoprotein reductase] + H2O + 2 H(+). Sterol 14-alpha demethylase; part of the gene cluster that mediates the biosynthesis of the tetrahydropyranyl antifungal agent restricticin that acts as an inhibitor of CYP51 and blocks the ergosterol biosynthesis. Sterol 14-alpha-demethylase plays a critical role in the biosynthesis of ergosterol, the major sterol component in fungal membranes that participates in a variety of functions. ResB acts as a self-resistant CYP51 that contains mutations found in CYP51s isolated from azole resistance strains and that is not inhibited by the final product of the cluster, restricticin. This chain is Sterol 14-alpha demethylase resB, found in Aspergillus sclerotiorum.